The sequence spans 642 residues: tRNA uridine 5-carboxymethylaminomethyl modification enzyme MnmG (642 aa).

24–29 (GGGHAG) lines the FAD pocket. 284 to 298 (GPRYCPSIEDKIHRF) provides a ligand contact to NAD(+).

This sequence belongs to the MnmG family. In terms of assembly, homodimer. Heterotetramer of two MnmE and two MnmG subunits. Requires FAD as cofactor.

Its subcellular location is the cytoplasm. Its function is as follows. NAD-binding protein involved in the addition of a carboxymethylaminomethyl (cmnm) group at the wobble position (U34) of certain tRNAs, forming tRNA-cmnm(5)s(2)U34. This chain is tRNA uridine 5-carboxymethylaminomethyl modification enzyme MnmG, found in Psychrobacter sp. (strain PRwf-1).